The following is a 192-amino-acid chain: Small ribosomal subunit protein uS5 (192 aa).

The disordered stretch occupies residues 1–21; it reads MAAERERGGRERGGRDRDERD. An S5 DRBM domain is found at 24-87; it reads FVDKLVHINR…DSAKRNLTRV (64 aa).

Belongs to the universal ribosomal protein uS5 family. In terms of assembly, part of the 30S ribosomal subunit. Contacts proteins S4 and S8.

Its function is as follows. With S4 and S12 plays an important role in translational accuracy. Functionally, located at the back of the 30S subunit body where it stabilizes the conformation of the head with respect to the body. The polypeptide is Small ribosomal subunit protein uS5 (Afipia carboxidovorans (strain ATCC 49405 / DSM 1227 / KCTC 32145 / OM5) (Oligotropha carboxidovorans)).